The primary structure comprises 979 residues: Putative disease resistance protein RGA1 (979 aa).

An NB-ARC domain is found at Gly-143–Gly-437. ATP is bound at residue Gly-182–Thr-189. LRR repeat units follow at residues Phe-524 to Leu-547, His-549 to Lys-570, Leu-571 to Lys-594, Leu-595 to Thr-619, Leu-637 to Thr-661, Leu-748 to Gly-773, Val-823 to Asn-841, Leu-842 to Ser-866, Ala-868 to Ser-890, Leu-891 to Gly-915, Thr-917 to His-939, and Leu-940 to Asp-965.

It belongs to the disease resistance NB-LRR family.

Functionally, disease resistance protein. Resistance proteins guard the plant against pathogens that contain an appropriate avirulence protein via a direct or indirect interaction with this avirulence protein. That triggers a defense system which restricts the pathogen growth. This chain is Putative disease resistance protein RGA1 (RGA1), found in Solanum bulbocastanum (Wild potato).